We begin with the raw amino-acid sequence, 66 residues long: Conotoxin PnMLCL-01 (66 aa).

The first 19 residues, 1–19, serve as a signal peptide directing secretion; the sequence is MLCLPVFIILLLLASPAAS. Positions 20-45 are excised as a propeptide; it reads NPLEKRIQSDLIRAALEDADTKNDPR. Residue cysteine 63 is modified to Cysteine amide.

This sequence belongs to the conotoxin T superfamily. Post-translationally, contains 2 disulfide bonds that can be either 'C1-C3, C2-C4' or 'C1-C4, C2-C3', since these disulfide connectivities have been observed for conotoxins with cysteine framework V (for examples, see AC P0DQQ7 and AC P81755). In terms of tissue distribution, expressed by the venom duct.

The protein resides in the secreted. The polypeptide is Conotoxin PnMLCL-01 (Conus pennaceus (Feathered cone)).